The chain runs to 957 residues: Sorting nexin-13 (957 aa).

Residues Ala-97–Asn-284 enclose the PXA domain. One can recognise an RGS domain in the interval Pro-373–Arg-511. In terms of domain architecture, PX spans Val-559–Lys-680. Residues Arg-601, Ser-603, Lys-628, and Arg-642 each contribute to the a 1,2-diacyl-sn-glycero-3-phospho-(1D-myo-inositol-3-phosphate) site.

Belongs to the sorting nexin family.

The protein localises to the early endosome membrane. May be involved in several stages of intracellular trafficking. Acts as a GAP for Galphas. May play a role in endosome homeostasis. In Mus musculus (Mouse), this protein is Sorting nexin-13 (Snx13).